The primary structure comprises 242 residues: Zinc-finger homeodomain protein 13 (242 aa).

The segment at 64–111 (YYECRKNHAADIGTTAYDGCGEFVSSTGEEDSLNCAACGCHRNFHREE) adopts a ZF-HD dimerization-type; degenerate zinc-finger fold. The disordered stretch occupies residues 144 to 166 (GGKSEGKKKKKEKESYGGDPIIK). Over residues 155 to 166 (EKESYGGDPIIK) the composition is skewed to basic and acidic residues. A DNA-binding region (homeobox) is located at residues 179-238 (VKRLKTKFTAEQTEKMRDYAEKLRWKVRPERQEEVEEFCVEIGVNRKNFRIWMNNHKDKI).

In terms of assembly, homo- and heterodimer with other ZFHD proteins. Interacts with MIF1, MIF2 and MIF3; these interactions prevent nuclear localization and DNA-binding to inhibit transcription regulation activity. Binds to ZHD11. In terms of tissue distribution, mostly expressed in flowers.

Its subcellular location is the nucleus. Its function is as follows. Putative transcription factor. This is Zinc-finger homeodomain protein 13 (ZHD13) from Arabidopsis thaliana (Mouse-ear cress).